A 318-amino-acid chain; its full sequence is uncharacterized protein (318 aa).

The protein belongs to the glycosyltransferase 2 family.

This is an uncharacterized protein from Rickettsia prowazekii (strain Madrid E).